We begin with the raw amino-acid sequence, 137 residues long: Structural protein A137R (137 aa).

This sequence belongs to the asfivirus A137R family. Interacts with host TBK1.

The protein resides in the virion. It is found in the host cytoplasm. Functionally, plays a role in the inhibition of the host innate immune response. Mechanistically, promotes the autophagy-mediated lysosomal degradation of host TBK1 and affects IRF3 nuclear translocation to block type I IFN production. The polypeptide is Structural protein A137R (Ornithodoros (relapsing fever ticks)).